A 548-amino-acid chain; its full sequence is Chaperonin GroEL (548 aa).

Residues 30–33 (TLGP), Lys51, 87–91 (DGTTT), Gly415, 479–481 (NAA), and Asp495 contribute to the ATP site.

The protein belongs to the chaperonin (HSP60) family. Forms a cylinder of 14 subunits composed of two heptameric rings stacked back-to-back. Interacts with the co-chaperonin GroES.

It is found in the cytoplasm. The enzyme catalyses ATP + H2O + a folded polypeptide = ADP + phosphate + an unfolded polypeptide.. In terms of biological role, together with its co-chaperonin GroES, plays an essential role in assisting protein folding. The GroEL-GroES system forms a nano-cage that allows encapsulation of the non-native substrate proteins and provides a physical environment optimized to promote and accelerate protein folding. The polypeptide is Chaperonin GroEL (Pectobacterium carotovorum subsp. carotovorum (strain PC1)).